The primary structure comprises 180 residues: NADH-quinone oxidoreductase subunit I (180 aa).

2 consecutive 4Fe-4S ferredoxin-type domains span residues 50–80 (LTRD…LQKA) and 90–119 (EFFR…LTPD). [4Fe-4S] cluster is bound by residues Cys-60, Cys-63, Cys-66, Cys-70, Cys-99, Cys-102, Cys-105, and Cys-109.

Belongs to the complex I 23 kDa subunit family. In terms of assembly, NDH-1 is composed of 14 different subunits. Subunits NuoA, H, J, K, L, M, N constitute the membrane sector of the complex. The cofactor is [4Fe-4S] cluster.

It localises to the cell inner membrane. The enzyme catalyses a quinone + NADH + 5 H(+)(in) = a quinol + NAD(+) + 4 H(+)(out). In terms of biological role, NDH-1 shuttles electrons from NADH, via FMN and iron-sulfur (Fe-S) centers, to quinones in the respiratory chain. The immediate electron acceptor for the enzyme in this species is believed to be ubiquinone. Couples the redox reaction to proton translocation (for every two electrons transferred, four hydrogen ions are translocated across the cytoplasmic membrane), and thus conserves the redox energy in a proton gradient. This Acinetobacter baumannii (strain ACICU) protein is NADH-quinone oxidoreductase subunit I.